Consider the following 401-residue polypeptide: Cytochrome P450 BJ-1 (401 aa).

C350 is a heme binding site.

This sequence belongs to the cytochrome P450 family. Heme serves as cofactor.

Cytochromes P450 are a group of heme-thiolate monooxygenases. They oxidize a variety of structurally unrelated compounds, including steroids, fatty acids, and xenobiotics. In Bradyrhizobium diazoefficiens (strain JCM 10833 / BCRC 13528 / IAM 13628 / NBRC 14792 / USDA 110), this protein is Cytochrome P450 BJ-1 (cyp112).